We begin with the raw amino-acid sequence, 214 residues long: RNA pyrophosphohydrolase (214 aa).

One can recognise a Nudix hydrolase domain in the interval 6-149 (GFRPNVGIIL…KRDVYQLALT (144 aa)). The short motif at 38 to 59 (GGIKYGETPMQAMYRELHEETG) is the Nudix box element.

The protein belongs to the Nudix hydrolase family. RppH subfamily. A divalent metal cation is required as a cofactor.

Functionally, accelerates the degradation of transcripts by removing pyrophosphate from the 5'-end of triphosphorylated RNA, leading to a more labile monophosphorylated state that can stimulate subsequent ribonuclease cleavage. The protein is RNA pyrophosphohydrolase of Burkholderia cenocepacia (strain ATCC BAA-245 / DSM 16553 / LMG 16656 / NCTC 13227 / J2315 / CF5610) (Burkholderia cepacia (strain J2315)).